Consider the following 380-residue polypeptide: 3-dehydroquinate synthase (380 aa).

Residues 100–104 (GAASD), 124–125 (TT), Lys137, and Lys146 each bind NAD(+). Zn(2+) is bound by residues Glu179, His251, and His267. Residues 320 to 343 (YMQRDKKNMQSNDTDSDKDSREMP) are disordered.

The protein belongs to the sugar phosphate cyclases superfamily. Dehydroquinate synthase family. NAD(+) is required as a cofactor. Requires Co(2+) as cofactor. Zn(2+) serves as cofactor.

It is found in the cytoplasm. The enzyme catalyses 7-phospho-2-dehydro-3-deoxy-D-arabino-heptonate = 3-dehydroquinate + phosphate. The protein operates within metabolic intermediate biosynthesis; chorismate biosynthesis; chorismate from D-erythrose 4-phosphate and phosphoenolpyruvate: step 2/7. In terms of biological role, catalyzes the conversion of 3-deoxy-D-arabino-heptulosonate 7-phosphate (DAHP) to dehydroquinate (DHQ). The polypeptide is 3-dehydroquinate synthase (Tropheryma whipplei (strain Twist) (Whipple's bacillus)).